Here is a 189-residue protein sequence, read N- to C-terminus: Potassium-transporting ATPase KdpC subunit (189 aa).

The helical transmembrane segment at 11–31 threads the bilayer; sequence LFVLLTVITGVLYPVFVTGLA.

It belongs to the KdpC family. In terms of assembly, the system is composed of three essential subunits: KdpA, KdpB and KdpC.

It is found in the cell inner membrane. Part of the high-affinity ATP-driven potassium transport (or Kdp) system, which catalyzes the hydrolysis of ATP coupled with the electrogenic transport of potassium into the cytoplasm. This subunit acts as a catalytic chaperone that increases the ATP-binding affinity of the ATP-hydrolyzing subunit KdpB by the formation of a transient KdpB/KdpC/ATP ternary complex. In Polynucleobacter asymbioticus (strain DSM 18221 / CIP 109841 / QLW-P1DMWA-1) (Polynucleobacter necessarius subsp. asymbioticus), this protein is Potassium-transporting ATPase KdpC subunit.